We begin with the raw amino-acid sequence, 169 residues long: UPF0303 protein Oant_1766 (169 aa).

It belongs to the UPF0303 family.

This Brucella anthropi (strain ATCC 49188 / DSM 6882 / CCUG 24695 / JCM 21032 / LMG 3331 / NBRC 15819 / NCTC 12168 / Alc 37) (Ochrobactrum anthropi) protein is UPF0303 protein Oant_1766.